A 450-amino-acid chain; its full sequence is 23S rRNA (uracil(1939)-C(5))-methyltransferase RlmD (450 aa).

The disordered stretch occupies residues 1–22; sequence MARNKGGLRFQPSGGARGPAIP. Residues 20 to 78 enclose the TRAM domain; it reads AIPVGKKQRLTIERLAHDGRGIAHEAGMTWFVSGGLPGEELEARVLGARSKVVDARSER. C91, C97, C100, and C179 together coordinate [4Fe-4S] cluster. Residues Q283, F312, N317, E333, D360, and D381 each contribute to the S-adenosyl-L-methionine site. The Nucleophile role is filled by C407.

It belongs to the class I-like SAM-binding methyltransferase superfamily. RNA M5U methyltransferase family. RlmD subfamily.

It catalyses the reaction uridine(1939) in 23S rRNA + S-adenosyl-L-methionine = 5-methyluridine(1939) in 23S rRNA + S-adenosyl-L-homocysteine + H(+). In terms of biological role, catalyzes the formation of 5-methyl-uridine at position 1939 (m5U1939) in 23S rRNA. The protein is 23S rRNA (uracil(1939)-C(5))-methyltransferase RlmD of Pseudomonas aeruginosa (strain UCBPP-PA14).